The chain runs to 205 residues: Holliday junction branch migration complex subunit RuvA (205 aa).

The tract at residues M1–A63 is domain I. Residues T64–V142 are domain II. The interval A143–A153 is flexible linker. The tract at residues A153–G205 is domain III.

It belongs to the RuvA family. In terms of assembly, homotetramer. Forms an RuvA(8)-RuvB(12)-Holliday junction (HJ) complex. HJ DNA is sandwiched between 2 RuvA tetramers; dsDNA enters through RuvA and exits via RuvB. An RuvB hexamer assembles on each DNA strand where it exits the tetramer. Each RuvB hexamer is contacted by two RuvA subunits (via domain III) on 2 adjacent RuvB subunits; this complex drives branch migration. In the full resolvosome a probable DNA-RuvA(4)-RuvB(12)-RuvC(2) complex forms which resolves the HJ.

The protein resides in the cytoplasm. In terms of biological role, the RuvA-RuvB-RuvC complex processes Holliday junction (HJ) DNA during genetic recombination and DNA repair, while the RuvA-RuvB complex plays an important role in the rescue of blocked DNA replication forks via replication fork reversal (RFR). RuvA specifically binds to HJ cruciform DNA, conferring on it an open structure. The RuvB hexamer acts as an ATP-dependent pump, pulling dsDNA into and through the RuvAB complex. HJ branch migration allows RuvC to scan DNA until it finds its consensus sequence, where it cleaves and resolves the cruciform DNA. The sequence is that of Holliday junction branch migration complex subunit RuvA from Brevibacillus brevis (strain 47 / JCM 6285 / NBRC 100599).